The chain runs to 567 residues: Protein ESMERALDA 1 (567 aa).

A disordered region spans residues 1–41 (MLAKNRLPGSGHTTPSPPASPRRSPRYRHGRSKAAAGSRFP). Topologically, residues 1 to 65 (MLAKNRLPGS…ILLSVLLRRQ (65 aa)) are cytoplasmic. Basic residues predominate over residues 23-32 (RSPRYRHGRS). Residues 66-86 (GIFLFAPLIYISCMLLYMGTV) traverse the membrane as a helical; Signal-anchor for type II membrane protein segment. The Lumenal segment spans residues 87–567 (SFDVVPIIQR…TPESRPPPAT (481 aa)). Residues Asn-121, Asn-145, Asn-184, and Asn-238 are each glycosylated (N-linked (GlcNAc...) asparagine). 331–333 (HLR) serves as a coordination point for substrate. Asn-403, Asn-419, Asn-449, Asn-538, and Asn-554 each carry an N-linked (GlcNAc...) asparagine glycan.

This sequence belongs to the glycosyltransferase GT106 family. In terms of tissue distribution, ubiquitous.

The protein localises to the golgi apparatus membrane. It functions in the pathway protein modification; protein glycosylation. In terms of biological role, glycosyltransferase that plays a role in cell adhesion. The chain is Protein ESMERALDA 1 from Arabidopsis thaliana (Mouse-ear cress).